A 250-amino-acid polypeptide reads, in one-letter code: MARYDRAITVFSPDGHLFQVEYALEAVRKGNAAVGVRGTDTVVLAVEKKSTPKLQDSRSARKIVSLDNHIALACAGLKADARVLINKARIECQSHRLTLEDPVTVEYITRYIAGLQQKYTQSGGVRPFGLSTLIVGFDPYTRIPALYQTDPSGTFSAWKANATGRNSNSIREFLEKNYKESAGQETVKLAIRALLEVVESGGKNIEVAVMTREEGVLKQLEEEEIDIIVAEIEAEKAAAEAAKKGPAKET.

Lys-62 is covalently cross-linked (Glycyl lysine isopeptide (Lys-Gly) (interchain with G-Cter in ubiquitin)).

Belongs to the peptidase T1A family. In terms of assembly, component of the 20S core complex of the 26S proteasome. The 26S proteasome is composed of a core protease (CP), known as the 20S proteasome, capped at one or both ends by the 19S regulatory particle (RP/PA700). The 20S proteasome core is composed of 28 subunits that are arranged in four stacked rings, resulting in a barrel-shaped structure. The two end rings are each formed by seven alpha subunits, and the two central rings are each formed by seven beta subunits. The catalytic chamber with the active sites is on the inside of the barrel. Interacts with KIN10 and KIN11 SnRK subunits, and with the SKP1A/ASK1 subunit of the SCF E3 ubiquitin ligase complex. Expressed in roots, leaves and flowers.

Its subcellular location is the cytoplasm. It is found in the nucleus. Functionally, the proteasome is a multicatalytic proteinase complex which is characterized by its ability to cleave peptides with Arg, Phe, Tyr, Leu, and Glu adjacent to the leaving group at neutral or slightly basic pH. The proteasome has an ATP-dependent proteolytic activity. Mediates the association of the SCF(TIR1) E3 ubiquitin ligase complex with the proteasome. This chain is Proteasome subunit alpha type-7-A (PAD1), found in Arabidopsis thaliana (Mouse-ear cress).